The primary structure comprises 252 residues: Cysteine-rich repeat secretory protein 38 (252 aa).

The signal sequence occupies residues 1–27 (MSSLKRIVWFPILAIAIQILSIHTVLS). Gnk2-homologous domains follow at residues 34 to 136 (FLFH…STNF) and 142 to 248 (FENR…IYPF).

The protein belongs to the cysteine-rich repeat secretory protein family.

Its subcellular location is the secreted. In Arabidopsis thaliana (Mouse-ear cress), this protein is Cysteine-rich repeat secretory protein 38 (CRRSP38).